We begin with the raw amino-acid sequence, 378 residues long: Serpin B6 (378 aa).

An N-acetylmethionine modification is found at Met1. Lys196 bears the N6-acetyllysine mark.

The protein belongs to the serpin family. Ov-serpin subfamily. As to quaternary structure, forms a complex with the monomeric form of beta-tryptase. As to expression, brain.

The protein localises to the cytoplasm. Functionally, inhibitor of cathepsin G, kallikrein-8 and thrombin. May play an important role in the inner ear in the protection against leakage of lysosomal content during stress. May be involved in the regulation of serine proteinases present in the brain or extravasated from the blood. The chain is Serpin B6 (SERPINB6) from Bos taurus (Bovine).